Reading from the N-terminus, the 421-residue chain is CinA-like protein (421 aa).

It belongs to the CinA family.

This chain is CinA-like protein, found in Synechococcus sp. (strain ATCC 27144 / PCC 6301 / SAUG 1402/1) (Anacystis nidulans).